A 635-amino-acid polypeptide reads, in one-letter code: Kelch-like protein 31 (635 aa).

In terms of domain architecture, BTB spans 74–138; that stretch reads CDLTVATKSK…AYSGKLTLSL (65 aa). Residues 173-274 enclose the BACK domain; it reads CMYVVNIADT…TPQDLVSHVQ (102 aa). Kelch repeat units lie at residues 318–366, 367–420, 421–467, 469–514, 516–566, and 567–615; these read VLLT…VLDG, FLYV…TFNG, LLFA…VIDG, ILVS…TVGD, AYVL…TLNN, and KIYL…VVTI.

Strongly expressed in fast skeletal muscle, and weakly in heart. Not expressed in other tissues.

This Danio rerio (Zebrafish) protein is Kelch-like protein 31 (klhl31).